Here is a 220-residue protein sequence, read N- to C-terminus: Uracil-DNA glycosylase (220 aa).

Asp-61 serves as the catalytic Proton acceptor.

This sequence belongs to the uracil-DNA glycosylase (UDG) superfamily. UNG family.

It is found in the cytoplasm. It catalyses the reaction Hydrolyzes single-stranded DNA or mismatched double-stranded DNA and polynucleotides, releasing free uracil.. In terms of biological role, excises uracil residues from the DNA which can arise as a result of misincorporation of dUMP residues by DNA polymerase or due to deamination of cytosine. The polypeptide is Uracil-DNA glycosylase (Pseudoalteromonas translucida (strain TAC 125)).